A 346-amino-acid polypeptide reads, in one-letter code: MVWLANPERYGQMQYRYCGKSGLRLPALSLGLWHNFGHVNALESQRAILRKAFDLGITHFDLANNYGPPPGSAEENFGRLLREDFAAYRDELIISTKAGYDMWPGPYGSGGSRKYLLASLDQSLKRMGLEYVDIFYSHRVDENTPMEETASALAHAVQSGKALYVGISSYSPERTQKMVELLHEWKIPLLIHQPSYNLLNRWVDKSGLLDTLQNNGVGCIAFTPLAQGLLTGKYLNGIPEDSRMHREGNKVRGLTPKMLTEANLNSLRLLNEMAQQRGQSMAQMALSWLLKDERVTSVLVGASRAEQLEENVQALNNLTFSTEELAQIDQHIADGELNLWQASSDK.

NADP(+) contacts are provided by Trp-33, Asp-61, Tyr-66, Ser-168, Gln-193, Thr-223, Leu-225, Gln-227, Lys-233, Ser-303, Gln-307, and Asn-311.

This sequence belongs to the shaker potassium channel beta subunit family.

The catalysed reaction is a primary alcohol + NADP(+) = an aldehyde + NADPH + H(+). Aldo-keto reductase that catalyzes the stereospecific, NADPH-dependent reduction of L-glyceraldehyde 3-phosphate (L-GAP) to L-glycerol 3-phosphate (L-G3P). The protein is L-glyceraldehyde 3-phosphate reductase of Escherichia coli O157:H7.